The sequence spans 606 residues: Anthranilate synthase alpha subunit 2, chloroplastic (606 aa).

The transit peptide at 1–49 directs the protein to the chloroplast; sequence MESIAAATFTPSRLAARPATPAAAAAPVRARAAVAAGGRRRTSRRGGVR.

The protein belongs to the anthranilate synthase component I family. Heterotetramer consisting of two non-identical subunits: a beta subunit and a large alpha subunit.

The protein resides in the plastid. It is found in the chloroplast. It carries out the reaction chorismate + L-glutamine = anthranilate + pyruvate + L-glutamate + H(+). It functions in the pathway amino-acid biosynthesis; L-tryptophan biosynthesis; L-tryptophan from chorismate: step 1/5. Its activity is regulated as follows. Feedback inhibition by tryptophan. Its function is as follows. Part of a heterotetrameric complex that catalyzes the two-step biosynthesis of anthranilate, an intermediate in the biosynthesis of L-tryptophan. In the first step, the glutamine-binding beta subunit of anthranilate synthase (AS) provides the glutamine amidotransferase activity which generates ammonia as a substrate that, along with chorismate, is used in the second step, catalyzed by the large alpha subunit of AS to produce anthranilate. The protein is Anthranilate synthase alpha subunit 2, chloroplastic of Oryza sativa subsp. japonica (Rice).